The following is a 388-amino-acid chain: Succinate--CoA ligase [ADP-forming] subunit beta (388 aa).

Positions 9 to 245 (KALLKEYGMP…KSQENERELK (237 aa)) constitute an ATP-grasp domain. Residues lysine 46, 53–55 (GRG), glutamate 100, tyrosine 103, and glutamate 108 contribute to the ATP site. Mg(2+) is bound by residues asparagine 200 and aspartate 214. Substrate-binding positions include asparagine 265 and 322 to 324 (GIV).

This sequence belongs to the succinate/malate CoA ligase beta subunit family. Heterotetramer of two alpha and two beta subunits. Mg(2+) is required as a cofactor.

It carries out the reaction succinate + ATP + CoA = succinyl-CoA + ADP + phosphate. It catalyses the reaction GTP + succinate + CoA = succinyl-CoA + GDP + phosphate. The protein operates within carbohydrate metabolism; tricarboxylic acid cycle; succinate from succinyl-CoA (ligase route): step 1/1. Succinyl-CoA synthetase functions in the citric acid cycle (TCA), coupling the hydrolysis of succinyl-CoA to the synthesis of either ATP or GTP and thus represents the only step of substrate-level phosphorylation in the TCA. The beta subunit provides nucleotide specificity of the enzyme and binds the substrate succinate, while the binding sites for coenzyme A and phosphate are found in the alpha subunit. This chain is Succinate--CoA ligase [ADP-forming] subunit beta, found in Acinetobacter baumannii (strain SDF).